Reading from the N-terminus, the 226-residue chain is Ribonuclease 3 (226 aa).

The region spanning 6 to 128 (INKLQRKLGY…LIGGVFLDSD (123 aa)) is the RNase III domain. Glu41 lines the Mg(2+) pocket. Asp45 is an active-site residue. Positions 114 and 117 each coordinate Mg(2+). Glu117 is an active-site residue. Residues 155-225 (DPKTRLQEYL…AEQALIKLGL (71 aa)) form the DRBM domain.

The protein belongs to the ribonuclease III family. As to quaternary structure, homodimer. Requires Mg(2+) as cofactor.

The protein localises to the cytoplasm. It catalyses the reaction Endonucleolytic cleavage to 5'-phosphomonoester.. In terms of biological role, digests double-stranded RNA. Involved in the processing of primary rRNA transcript to yield the immediate precursors to the large and small rRNAs (23S and 16S). Processes some mRNAs, and tRNAs when they are encoded in the rRNA operon. Processes pre-crRNA and tracrRNA of type II CRISPR loci if present in the organism. This chain is Ribonuclease 3 (rnc), found in Pantoea ananatis (strain LMG 20103).